Consider the following 121-residue polypeptide: MARVKRGVTSHAKHKKVLKAAKGYYGRRKNTIRIAKQAVEKGLQYAYRDRKNKKRTFRALWIQRLNAAVREHGLTYSRFINALAKSGIEVDRKALSELAIHEPAAFAAVVEKAKSALPKAA.

This sequence belongs to the bacterial ribosomal protein bL20 family.

Its function is as follows. Binds directly to 23S ribosomal RNA and is necessary for the in vitro assembly process of the 50S ribosomal subunit. It is not involved in the protein synthesizing functions of that subunit. In Methylorubrum populi (strain ATCC BAA-705 / NCIMB 13946 / BJ001) (Methylobacterium populi), this protein is Large ribosomal subunit protein bL20.